A 444-amino-acid chain; its full sequence is Glutamate--tRNA ligase 1 (444 aa).

The short motif at 8 to 18 (PSPTGFLHVGN) is the 'HIGH' region element. Positions 239–243 (KISKR) match the 'KMSKS' region motif. An ATP-binding site is contributed by K242.

Belongs to the class-I aminoacyl-tRNA synthetase family. Glutamate--tRNA ligase type 1 subfamily. As to quaternary structure, monomer.

The protein localises to the cytoplasm. The catalysed reaction is tRNA(Glu) + L-glutamate + ATP = L-glutamyl-tRNA(Glu) + AMP + diphosphate. Catalyzes the attachment of glutamate to tRNA(Glu) in a two-step reaction: glutamate is first activated by ATP to form Glu-AMP and then transferred to the acceptor end of tRNA(Glu). The sequence is that of Glutamate--tRNA ligase 1 from Zymomonas mobilis subsp. mobilis (strain ATCC 31821 / ZM4 / CP4).